The following is a 62-amino-acid chain: MARYRHSRSRSRSRYRRRRRRRSRYRSRRRXYRGRRRRRSRRGRRRRGYSRRRYSRRRRRRY.

Residues 1-62 (MARYRHSRSR…RYSRRRRRRY (62 aa)) form a disordered region.

This sequence belongs to the protamine P1 family. Testis.

It localises to the nucleus. The protein resides in the chromosome. Protamines substitute for histones in the chromatin of sperm during the haploid phase of spermatogenesis. They compact sperm DNA into a highly condensed, stable and inactive complex. The chain is Sperm protamine P1 (PRM1) from Dorcopsulus vanheurni (Lesser forest wallaby).